The chain runs to 221 residues: Oxaloacetate tautomerase oaa1, mitochondrial (221 aa).

Mg(2+) contacts are provided by Glu59, Glu61, and Asp93.

The protein belongs to the FAH family. Mg(2+) is required as a cofactor. Requires Mn(2+) as cofactor.

The protein resides in the mitochondrion. It localises to the cytoplasm. It carries out the reaction oxaloacetate = enol-oxaloacetate. In terms of biological role, tautomerase that converts enol-oxaloacetate, a strong inhibitor of succinate dehydrogenase, to the physiological keto form of oxaloacetate. In Schizosaccharomyces pombe (strain 972 / ATCC 24843) (Fission yeast), this protein is Oxaloacetate tautomerase oaa1, mitochondrial.